We begin with the raw amino-acid sequence, 47 residues long: Type II secretion system protein N (47 aa).

Belongs to the GSP N family.

The protein localises to the cell inner membrane. In terms of biological role, involved in a type II secretion system (T2SS, formerly general secretion pathway, GSP) for the export of proteins. This Aeromonas salmonicida protein is Type II secretion system protein N (exeN).